Consider the following 145-residue polypeptide: Transcription antitermination protein NusB (145 aa).

The protein belongs to the NusB family.

In terms of biological role, involved in transcription antitermination. Required for transcription of ribosomal RNA (rRNA) genes. Binds specifically to the boxA antiterminator sequence of the ribosomal RNA (rrn) operons. This chain is Transcription antitermination protein NusB, found in Aromatoleum aromaticum (strain DSM 19018 / LMG 30748 / EbN1) (Azoarcus sp. (strain EbN1)).